The chain runs to 400 residues: Phosphoglycerate kinase (400 aa).

Residues 21–23 (DLN), Arg36, 59–62 (HLGR), Arg116, and Arg149 each bind substrate. ATP is bound by residues Lys200, Glu317, and 343–346 (GGDT).

The protein belongs to the phosphoglycerate kinase family. Monomer.

The protein resides in the cytoplasm. The catalysed reaction is (2R)-3-phosphoglycerate + ATP = (2R)-3-phospho-glyceroyl phosphate + ADP. Its pathway is carbohydrate degradation; glycolysis; pyruvate from D-glyceraldehyde 3-phosphate: step 2/5. This is Phosphoglycerate kinase from Blochmanniella floridana.